Consider the following 225-residue polypeptide: Ribosome maturation factor RimM (225 aa).

In terms of domain architecture, PRC barrel spans 144 to 225 (ADEFYWVDLI…RIVVDWEADY (82 aa)).

It belongs to the RimM family. Binds ribosomal protein uS19.

It is found in the cytoplasm. In terms of biological role, an accessory protein needed during the final step in the assembly of 30S ribosomal subunit, possibly for assembly of the head region. Essential for efficient processing of 16S rRNA. May be needed both before and after RbfA during the maturation of 16S rRNA. It has affinity for free ribosomal 30S subunits but not for 70S ribosomes. The polypeptide is Ribosome maturation factor RimM (Burkholderia lata (strain ATCC 17760 / DSM 23089 / LMG 22485 / NCIMB 9086 / R18194 / 383)).